We begin with the raw amino-acid sequence, 280 residues long: Polyamine aminopropyltransferase (280 aa).

Positions 3–237 (DVYFMERDPY…YWWSFSVGSK (235 aa)) constitute a PABS domain. Gln33 contributes to the S-methyl-5'-thioadenosine binding site. Spermidine contacts are provided by His64 and Asp88. S-methyl-5'-thioadenosine-binding positions include Asp108 and 139 to 140 (DG). Residue Asp157 is the Proton acceptor of the active site. A spermidine-binding site is contributed by 157 to 160 (DSTD).

The protein belongs to the spermidine/spermine synthase family. In terms of assembly, homodimer or homotetramer.

It is found in the cytoplasm. The catalysed reaction is S-adenosyl 3-(methylsulfanyl)propylamine + putrescine = S-methyl-5'-thioadenosine + spermidine + H(+). Its pathway is amine and polyamine biosynthesis; spermidine biosynthesis; spermidine from putrescine: step 1/1. Functionally, catalyzes the irreversible transfer of a propylamine group from the amino donor S-adenosylmethioninamine (decarboxy-AdoMet) to putrescine (1,4-diaminobutane) to yield spermidine. The polypeptide is Polyamine aminopropyltransferase (Hydrogenobaculum sp. (strain Y04AAS1)).